Consider the following 193-residue polypeptide: Corrinoid adenosyltransferase (193 aa).

ATP contacts are provided by residues 5–13 (TKTGDKGQT), Lys22, 130–135 (RRAERR), and Asn154.

This sequence belongs to the Cob(I)alamin adenosyltransferase family. Homotrimer.

It is found in the cytoplasm. The catalysed reaction is 2 cob(II)yrinate a,c diamide + reduced [electron-transfer flavoprotein] + 2 ATP = 2 adenosylcob(III)yrinate a,c-diamide + 2 triphosphate + oxidized [electron-transfer flavoprotein] + 3 H(+). It catalyses the reaction 2 cob(II)alamin + reduced [electron-transfer flavoprotein] + 2 ATP = 2 adenosylcob(III)alamin + 2 triphosphate + oxidized [electron-transfer flavoprotein] + 3 H(+). The protein operates within cofactor biosynthesis; adenosylcobalamin biosynthesis; adenosylcobalamin from cob(II)yrinate a,c-diamide: step 2/7. This Bacillus subtilis (strain 168) protein is Corrinoid adenosyltransferase (yvqK).